Here is a 949-residue protein sequence, read N- to C-terminus: Glycine dehydrogenase (decarboxylating) (949 aa).

Lys700 is subject to N6-(pyridoxal phosphate)lysine.

The protein belongs to the GcvP family. As to quaternary structure, the glycine cleavage system is composed of four proteins: P, T, L and H. Pyridoxal 5'-phosphate is required as a cofactor.

The enzyme catalyses N(6)-[(R)-lipoyl]-L-lysyl-[glycine-cleavage complex H protein] + glycine + H(+) = N(6)-[(R)-S(8)-aminomethyldihydrolipoyl]-L-lysyl-[glycine-cleavage complex H protein] + CO2. Functionally, the glycine cleavage system catalyzes the degradation of glycine. The P protein binds the alpha-amino group of glycine through its pyridoxal phosphate cofactor; CO(2) is released and the remaining methylamine moiety is then transferred to the lipoamide cofactor of the H protein. The sequence is that of Glycine dehydrogenase (decarboxylating) from Christiangramia forsetii (strain DSM 17595 / CGMCC 1.15422 / KT0803) (Gramella forsetii).